The following is a 353-amino-acid chain: 2-Hydroxyacid oxidase 2 (353 aa).

The 352-residue stretch at 2-353 (PLVCLADFKA…SPDLIQFSRL (352 aa)) folds into the FMN hydroxy acid dehydrogenase domain. FMN contacts are provided by residues 77–79 (PTA), serine 106, and glutamine 128. A 2-oxocarboxylate is bound at residue tyrosine 130. Serine 133 carries the phosphoserine modification. Threonine 156 is a binding site for FMN. Arginine 165 serves as a coordination point for a 2-oxocarboxylate. Lysine 224 contributes to the FMN binding site. The active-site Proton acceptor is histidine 248. A 2-oxocarboxylate is bound at residue arginine 251. Residues 279–283 (DGGVR) and 302–303 (GR) each bind FMN. The short motif at 351–353 (SRL) is the Microbody targeting signal element.

It belongs to the FMN-dependent alpha-hydroxy acid dehydrogenase family. As to quaternary structure, homotetramer. Could also form homooctamer. It depends on FMN as a cofactor. As to expression, expressed in kidney.

It localises to the peroxisome. The catalysed reaction is a (2S)-2-hydroxycarboxylate + O2 = a 2-oxocarboxylate + H2O2. It catalyses the reaction 2-hydroxyoctanoate + O2 = 2-oxooctanoate + H2O2. It carries out the reaction 2-hydroxyhexadecanoate + O2 = 2-oxohexadecanoate + H2O2. The enzyme catalyses 2-hydroxyhexanoate + O2 = 2-oxohexanoate + H2O2. The catalysed reaction is mandelate + O2 = phenylglyoxylate + H2O2. With respect to regulation, is inhibited in vitro by CCPST (4-carboxy-5-(4-chlorophenyl)sulfanyl-1,2,3-thiadiazole). Its function is as follows. Oxidase that catalyzes the oxidation of medium and long chain hydroxyacids such as 2-hydroxyhexadecanoate, 2-hydroxyoctanoate, 2-hydroxyhexanoate and 2-hydroxybutanoate, to the correspondong 2-oxoacids. Its role in the oxidation of 2-hydroxy fatty acids may contribute to the general pathway of fatty acid alpha-oxidation. Can also use mandelate as substrate. Active in vitro with the artificial electron acceptor 2,6-dichlorophenolindophenol (DCIP), but O2 is believed to be the physiological electron acceptor, leading to the production of H2O2. This is 2-Hydroxyacid oxidase 2 (Hao2) from Rattus norvegicus (Rat).